Reading from the N-terminus, the 507-residue chain is Fatty acid resistance protein FarB (507 aa).

Helical transmembrane passes span 8-28 (GAAL…EVLD), 52-72 (WVIT…GFLA), 78-98 (VKLF…CGIA), 109-129 (ILQG…LMAS), 136-156 (MLAL…GPIL), 164-184 (WHWG…AWIT), 199-219 (PTDY…QMML), 233-253 (IITL…WELG), 274-294 (IATS…PLVL), 303-323 (AWAG…SPLI), 334-354 (LLVT…TDFY), 363-383 (IWPQ…LTTI), 399-419 (LSNF…STLW), and 478-498 (IFLA…LAKP).

This sequence belongs to the major facilitator superfamily. EmrB family. As to quaternary structure, probably part of a tripartite efflux system FarAB-MtrE, which is composed of an inner membrane transporter, FarB, a periplasmic membrane fusion protein, FarA, and an outer membrane component, MtrE.

The protein localises to the cell inner membrane. Its function is as follows. Mediates resistance to long-chained antibacterial fatty acids (FAs). Function is dependent on the MtrE outer membrane protein. The protein is Fatty acid resistance protein FarB of Neisseria gonorrhoeae.